The following is a 338-amino-acid chain: Probable family 20 transposase (338 aa).

The protein belongs to the transposase 20 family.

In terms of biological role, required for the transposition of an insertion element. This is Probable family 20 transposase from Pseudomonas aeruginosa (strain ATCC 15692 / DSM 22644 / CIP 104116 / JCM 14847 / LMG 12228 / 1C / PRS 101 / PAO1).